The primary structure comprises 799 residues: Zinc finger X-linked protein ZXDA (799 aa).

Residues Met-1–Phe-89 form a disordered region. Residues Leu-13 to Gly-26 are compositionally biased toward gly residues. 10 C2H2-type zinc fingers span residues Tyr-267–His-291, Phe-300–His-324, Phe-330–His-354, Phe-360–His-382, Tyr-389–His-413, Phe-420–His-444, Phe-450–His-474, Phe-480–His-504, Phe-510–His-534, and Ser-543–His-568. Positions Tyr-267–Asp-573 are required for interaction with ZXDC. The tract at residues Gln-572–Val-699 is required for transcriptional activation.

The protein belongs to the ZXD family. Self-associates. Interacts with ZXDC and CIITA. As to expression, may be expressed in brain, heart, kidney, liver, lung, muscle and placenta.

It is found in the nucleus. Functionally, cooperates with CIITA to promote transcription of MHC class I and MHC class II genes. The protein is Zinc finger X-linked protein ZXDA (ZXDA) of Homo sapiens (Human).